A 72-amino-acid chain; its full sequence is uncharacterized protein (72 aa).

The protein belongs to the phage portal family. HK97 subfamily.

This is an uncharacterized protein from Rickettsia conorii (strain ATCC VR-613 / Malish 7).